Consider the following 211-residue polypeptide: MQTSTNYPRLGIMGGTFDPIHHGHLVAASEVADLFSLDRVLFVPTGQPWQKKNRTVTPAEDRYLMTTIATASNPRFSVSRVDIDRGGPTYTVDTLHDLHERYPHAELFFITGADAVARMATWRDCTEMMSLATFVAVTRPGYSLEKTELGPLGDSVTMVEVPAMAISSTNIRARARANRPIWYLVPDGVVQYIAKEKLYLPSGQVGASSMW.

This sequence belongs to the NadD family.

The enzyme catalyses nicotinate beta-D-ribonucleotide + ATP + H(+) = deamido-NAD(+) + diphosphate. The protein operates within cofactor biosynthesis; NAD(+) biosynthesis; deamido-NAD(+) from nicotinate D-ribonucleotide: step 1/1. Its function is as follows. Catalyzes the reversible adenylation of nicotinate mononucleotide (NaMN) to nicotinic acid adenine dinucleotide (NaAD). This Corynebacterium kroppenstedtii (strain DSM 44385 / JCM 11950 / CIP 105744 / CCUG 35717) protein is Probable nicotinate-nucleotide adenylyltransferase.